Here is a 361-residue protein sequence, read N- to C-terminus: tRNA/tmRNA (uracil-C(5))-methyltransferase (361 aa).

5 residues coordinate S-adenosyl-L-methionine: Gln183, Tyr211, Asn216, Glu232, and Asp294. Cys319 serves as the catalytic Nucleophile. Catalysis depends on Glu353, which acts as the Proton acceptor.

This sequence belongs to the class I-like SAM-binding methyltransferase superfamily. RNA M5U methyltransferase family. TrmA subfamily.

The enzyme catalyses uridine(54) in tRNA + S-adenosyl-L-methionine = 5-methyluridine(54) in tRNA + S-adenosyl-L-homocysteine + H(+). It catalyses the reaction uridine(341) in tmRNA + S-adenosyl-L-methionine = 5-methyluridine(341) in tmRNA + S-adenosyl-L-homocysteine + H(+). Functionally, dual-specificity methyltransferase that catalyzes the formation of 5-methyluridine at position 54 (m5U54) in all tRNAs, and that of position 341 (m5U341) in tmRNA (transfer-mRNA). The sequence is that of tRNA/tmRNA (uracil-C(5))-methyltransferase from Acinetobacter baumannii (strain ACICU).